Here is a 177-residue protein sequence, read N- to C-terminus: tRNA-splicing endonuclease (177 aa).

Active-site residues include Tyr-114, His-123, and Lys-154.

Belongs to the tRNA-intron endonuclease family. Archaeal short subfamily. In terms of assembly, homotetramer; although the tetramer contains four active sites, only two participate in the cleavage. Therefore, it should be considered as a dimer of dimers.

The enzyme catalyses pretRNA = a 3'-half-tRNA molecule with a 5'-OH end + a 5'-half-tRNA molecule with a 2',3'-cyclic phosphate end + an intron with a 2',3'-cyclic phosphate and a 5'-hydroxyl terminus.. Endonuclease that removes tRNA introns. Cleaves pre-tRNA at the 5'- and 3'-splice sites to release the intron. The products are an intron and two tRNA half-molecules bearing 2',3' cyclic phosphate and 5'-OH termini. Recognizes a pseudosymmetric substrate in which 2 bulged loops of 3 bases are separated by a stem of 4 bp. The sequence is that of tRNA-splicing endonuclease from Methanococcus maripaludis (strain DSM 14266 / JCM 13030 / NBRC 101832 / S2 / LL).